The following is a 122-amino-acid chain: Flagellar protein FliT (122 aa).

Residues 1–50 (MERQQQLLAAYQQIHSLSSQMIALAQTERWEDLVELELAYVTAVESTAAF) form a required for homodimerization region. The segment at 60 to 98 (LQELLRNKLQQILDNETELKRLLQQRMDQLKELIGQSTR) is fliD binding.

The protein belongs to the FliT family. As to quaternary structure, homodimer. Interacts with FliD and FlhC.

It is found in the cytoplasm. Its subcellular location is the cytosol. Its function is as follows. Dual-function protein that regulates the transcription of class 2 flagellar operons and that also acts as an export chaperone for the filament-capping protein FliD. As a transcriptional regulator, acts as an anti-FlhDC factor; it directly binds FlhC, thus inhibiting the binding of the FlhC/FlhD complex to class 2 promoters, resulting in decreased expression of class 2 flagellar operons. As a chaperone, effects FliD transition to the membrane by preventing its premature polymerization, and by directing it to the export apparatus. The protein is Flagellar protein FliT of Serratia proteamaculans (strain 568).